Here is a 591-residue protein sequence, read N- to C-terminus: Formate--tetrahydrofolate ligase (591 aa).

74–81 (TPLGEGKS) is a binding site for ATP.

The protein belongs to the formate--tetrahydrofolate ligase family.

The enzyme catalyses (6S)-5,6,7,8-tetrahydrofolate + formate + ATP = (6R)-10-formyltetrahydrofolate + ADP + phosphate. It functions in the pathway one-carbon metabolism; tetrahydrofolate interconversion. The sequence is that of Formate--tetrahydrofolate ligase from Desulfovibrio desulfuricans (strain ATCC 27774 / DSM 6949 / MB).